We begin with the raw amino-acid sequence, 301 residues long: Amylovoran biosynthesis glycosyltransferase AmsB (301 aa).

Belongs to the glycosyltransferase 2 family.

Its pathway is glycan metabolism; exopolysaccharide biosynthesis. Functionally, involved in the biosynthesis of amylovoran, which functions as a virulence factor. May function as a glycosyl transferase which transfers galactose from UDP-galactose to a lipid-linked amylovoran-subunit precursor. This Erwinia amylovora (Fire blight bacteria) protein is Amylovoran biosynthesis glycosyltransferase AmsB (amsB).